The primary structure comprises 587 residues: Nucleoporin ndc-1 (587 aa).

The Cytoplasmic segment spans residues 1–79 (MMGENSSAYT…FHSEIDVRKK (79 aa)). The interval 32–55 (ASTSATSSPNLRKSPNRGFSSPRA) is disordered. Residues 80-100 (LASFVCGAAVALSFIVTVSIL) form a helical membrane-spanning segment. Over 101 to 121 (KLSIWAPFSSVQDSLTWWLYP) the chain is Perinuclear space. A helical membrane pass occupies residues 122 to 142 (TSWPVTLFIWLSSVAWTFLII). The Cytoplasmic portion of the chain corresponds to 143–161 (HQFCTVTQVPRIPITDTYA). Residues 162–182 (WAGAALEFVHRLIFVYTAFTV) form a helical membrane-spanning segment. Residues 183-187 (SESSF) lie on the Perinuclear space side of the membrane. Residues 188-208 (FEDFAWIAIAFSVAISSALVI) traverse the membrane as a helical segment. Residues 209–255 (FRSDFHLNFSNVQVNSFKTLIDFAKSLPYGSLAETSGVDAAIAYTAA) lie on the Cytoplasmic side of the membrane. The chain crosses the membrane as a helical span at residues 256–276 (MALTVFGSPLLWGFSAWWLLI). Topologically, residues 277-281 (NIQFH) are perinuclear space. Residues 282–302 (LVLFGVCFAQQFFAKIFMKIV) traverse the membrane as a helical segment. Topologically, residues 303-587 (NQIVMKPMKF…TIKLVCAEEI (285 aa)) are cytoplasmic.

It belongs to the NDC1 family.

Its subcellular location is the nucleus. The protein localises to the nuclear pore complex. It is found in the nucleus membrane. Component of the nuclear pore complex (NPC), which plays a key role in de novo assembly and insertion of NPC in the nuclear envelope. The protein is Nucleoporin ndc-1 (npp-22) of Caenorhabditis briggsae.